Consider the following 348-residue polypeptide: Spermidine/putrescine import ATP-binding protein PotA (348 aa).

Positions 6–236 constitute an ABC transporter domain; sequence IRLVNVTKEY…PKNVFVADFI (231 aa). ATP is bound at residue 38–45; the sequence is GPSGCGKT.

It belongs to the ABC transporter superfamily. Spermidine/putrescine importer (TC 3.A.1.11.1) family. The complex is composed of two ATP-binding proteins (PotA), two transmembrane proteins (PotB and PotC) and a solute-binding protein (PotD).

It is found in the cell membrane. The catalysed reaction is ATP + H2O + polyamine-[polyamine-binding protein]Side 1 = ADP + phosphate + polyamineSide 2 + [polyamine-binding protein]Side 1.. In terms of biological role, part of the ABC transporter complex PotABCD involved in spermidine/putrescine import. Responsible for energy coupling to the transport system. The chain is Spermidine/putrescine import ATP-binding protein PotA from Desulfitobacterium hafniense (strain Y51).